A 278-amino-acid polypeptide reads, in one-letter code: Short-chain dehydrogenase RED2 (278 aa).

Residues I15, D70, R132, Y178, K182, V211, and T213 each coordinate NADP(+). The active-site Proton donor is the Y178. K182 (lowers pKa of active site Tyr) is an active-site residue.

This sequence belongs to the short-chain dehydrogenases/reductases (SDR) family.

It participates in polyketide biosynthesis. Its function is as follows. Short-chain dehydrogenase; part of the gene cluster that mediates the biosynthesis of pyriculol and pyriculariol, two heptaketides that induce lesion formation upon application on rice leaves but are dispensable for pathogenicity. The highly reducing polyketide synthase synthesizes the heptaketide backbone of pyriculol and pyriculariol. Pyriculol and pyriculariol contain several hydroxyl moieties and double bonds, so it can be assumed that several reduction steps occur during biosynthesis. These reactions could be executed by PKS19 itself or partly by the tailoring enzymes OXR1, OXR2, RED1, RED2 or RED3, identified within the cluster. The FAD-linked oxidoreductase OXR1 is the only tailoring enzyme for which the function has been determined yet, and is involved in the oxidation of dihydropyriculol and dihydropyriculariol into pyriculol and pyriculariol, respectively. The sequence is that of Short-chain dehydrogenase RED2 from Pyricularia oryzae (strain 70-15 / ATCC MYA-4617 / FGSC 8958) (Rice blast fungus).